The sequence spans 181 residues: Peptidyl-prolyl cis-trans isomerase H (181 aa).

A PPIase cyclophilin-type domain is found at Phe-17–Glu-180.

It belongs to the cyclophilin-type PPIase family. PPIase H subfamily.

Its subcellular location is the nucleus. It carries out the reaction [protein]-peptidylproline (omega=180) = [protein]-peptidylproline (omega=0). Its function is as follows. PPIases accelerate the folding of proteins. It catalyzes the cis-trans isomerization of proline imidic peptide bonds in oligopeptides. The protein is Peptidyl-prolyl cis-trans isomerase H (cyp3) of Aspergillus fumigatus (strain ATCC MYA-4609 / CBS 101355 / FGSC A1100 / Af293) (Neosartorya fumigata).